Here is a 585-residue protein sequence, read N- to C-terminus: Serine/threonine-protein kinase PknI (585 aa).

At Met1–Arg349 the chain is on the cytoplasmic side. In terms of domain architecture, Protein kinase spans Tyr12–Asn252. ATP is bound by residues Leu18–Val26 and Lys41. The ADP site is built by Lys41, Asp90, and Val92. Asp137 (proton acceptor) is an active-site residue. A helical transmembrane segment spans residues Ile350–Ile370. The Extracellular portion of the chain corresponds to Gly371–Arg585. The tract at residues Ser546–Arg585 is disordered. Low complexity predominate over residues Thr554 to Arg585.

This sequence belongs to the protein kinase superfamily. Ser/Thr protein kinase family. It depends on Mn(2+) as a cofactor. Post-translationally, autophosphorylated at serine and threonine residues.

The protein localises to the cytoplasm. Its subcellular location is the cell membrane. It carries out the reaction L-seryl-[protein] + ATP = O-phospho-L-seryl-[protein] + ADP + H(+). The enzyme catalyses L-threonyl-[protein] + ATP = O-phospho-L-threonyl-[protein] + ADP + H(+). Functionally, plays an important role in slowing down the growth of mycobacteria within the infected host. The sequence is that of Serine/threonine-protein kinase PknI (pknI) from Mycobacterium bovis (strain ATCC BAA-935 / AF2122/97).